The chain runs to 951 residues: Serine/threonine-protein kinase ATG1 (951 aa).

The Protein kinase domain occupies 22–327 (FTINEEIGKG…FPEYFAHPVV (306 aa)). Residues 28–36 (IGKGSFATV) and lysine 51 contribute to the ATP site. The active-site Proton acceptor is aspartate 165. 4 disordered regions span residues 343–375 (IITP…PVET), 387–458 (EQAP…YDEQ), 514–573 (HIPK…SSPS), and 924–951 (HQSM…TPPH). 2 stretches are compositionally biased toward basic and acidic residues: residues 359–368 (SLRERQRENP) and 432–442 (PRQRDRTERHY). Polar residues-rich tracts occupy residues 547–573 (AQGN…SSPS) and 939–951 (GGTT…TPPH).

Belongs to the protein kinase superfamily. Ser/Thr protein kinase family. APG1/unc-51/ULK1 subfamily. As to quaternary structure, homodimer. Forms a ternary complex with ATG13 and ATG17.

It localises to the cytoplasm. The protein resides in the preautophagosomal structure membrane. The catalysed reaction is L-seryl-[protein] + ATP = O-phospho-L-seryl-[protein] + ADP + H(+). It carries out the reaction L-threonyl-[protein] + ATP = O-phospho-L-threonyl-[protein] + ADP + H(+). Functionally, serine/threonine protein kinase involved in the cytoplasm to vacuole transport (Cvt) and found to be essential in autophagy, where it is required for the formation of autophagosomes. Involved in the clearance of protein aggregates which cannot be efficiently cleared by the proteasome. Required for selective autophagic degradation of the nucleus (nucleophagy) as well as for mitophagy which contributes to regulate mitochondrial quantity and quality by eliminating the mitochondria to a basal level to fulfill cellular energy requirements and preventing excess ROS production. Also involved in endoplasmic reticulum-specific autophagic process, in selective removal of ER-associated degradation (ERAD) substrates. Plays a key role in ATG9 and ATG23 cycling through the pre-autophagosomal structure and is necessary to promote ATG18 binding to ATG9 through phosphorylation of ATG9. Catalyzes phosphorylation of ATG4, decreasing the interaction between ATG4 and ATG8 and impairing deconjugation of PE-conjugated forms of ATG8. The protein is Serine/threonine-protein kinase ATG1 of Sclerotinia sclerotiorum (strain ATCC 18683 / 1980 / Ss-1) (White mold).